Consider the following 150-residue polypeptide: Large ribosomal subunit protein uL13 (150 aa).

The segment at 130 to 150 (EHPHGAQQPQPYQLNPSASIK) is disordered. Residues 136–150 (QQPQPYQLNPSASIK) are compositionally biased toward polar residues.

Belongs to the universal ribosomal protein uL13 family. In terms of assembly, part of the 50S ribosomal subunit.

This protein is one of the early assembly proteins of the 50S ribosomal subunit, although it is not seen to bind rRNA by itself. It is important during the early stages of 50S assembly. The polypeptide is Large ribosomal subunit protein uL13 (Synechococcus sp. (strain RCC307)).